The following is a 1634-amino-acid chain: Probable serine/threonine-protein kinase DDB_G0282895 (1634 aa).

The stretch at Tyr40–Tyr63 is one MORN 1 repeat. The segment at Gln84 to Asn131 is disordered. Positions Lys89–Pro109 are enriched in low complexity. Polar residues predominate over residues Ile110 to Gln119. Residues Asn120 to Asn131 show a composition bias toward low complexity. The MORN 2 repeat unit spans residues Tyr169 to Ser191. Composition is skewed to low complexity over residues Ser273–Thr292 and Ser318–Ser339. Disordered regions lie at residues Ser273–Gln367, Thr658–Val750, and Ser783–Gln816. A compositionally biased stretch (polar residues) spans Gly340–Ser351. 3 stretches are compositionally biased toward low complexity: residues Gln352–Gln367, Thr658–Thr688, and Pro703–Ser715. Residues Asp716–Ser732 show a composition bias toward polar residues. Positions Asn787 to Asn813 are enriched in low complexity. The chain crosses the membrane as a helical span at residues Ile1255–Tyr1275. Residues Leu1377–Cys1634 form the Protein kinase domain. Residues Leu1383–Val1391 and Lys1404 contribute to the ATP site. Asp1500 (proton acceptor) is an active-site residue.

Belongs to the protein kinase superfamily. TKL Ser/Thr protein kinase family.

It is found in the membrane. The enzyme catalyses L-seryl-[protein] + ATP = O-phospho-L-seryl-[protein] + ADP + H(+). It catalyses the reaction L-threonyl-[protein] + ATP = O-phospho-L-threonyl-[protein] + ADP + H(+). This chain is Probable serine/threonine-protein kinase DDB_G0282895, found in Dictyostelium discoideum (Social amoeba).